Reading from the N-terminus, the 24-residue chain is Brevinin-1E (24 aa).

Cys18 and Cys24 are disulfide-bonded.

Expressed by the skin glands.

The protein localises to the secreted. Functionally, antimicrobial peptide. Stimulates insulin release by BRIN-BD11 cells in vitro. The polypeptide is Brevinin-1E (Pelophylax saharicus (Sahara frog)).